The following is a 226-amino-acid chain: Prolactin (226 aa).

An N-terminal signal peptide occupies residues 1 to 29 (MNSQGSDRKAVTLLLLVMSNLLFCQNAHP). A disulfide bridge links cysteine 33 with cysteine 38. Serine 53 and serine 117 each carry phosphoserine. 2 disulfides stabilise this stretch: cysteine 85-cysteine 201 and cysteine 218-cysteine 226.

Belongs to the somatotropin/prolactin family. In terms of assembly, interacts with PRLR.

Its subcellular location is the secreted. In terms of biological role, prolactin acts primarily on the mammary gland by promoting lactation. This chain is Prolactin (PRL), found in Mesocricetus auratus (Golden hamster).